A 59-amino-acid chain; its full sequence is Cuticle protein 7 isoform a (59 aa).

At glutamine 1 the chain carries Pyrrolidone carboxylic acid.

The protein is Cuticle protein 7 isoform a of Limulus polyphemus (Atlantic horseshoe crab).